The following is a 365-amino-acid chain: Coxsackievirus and adenovirus receptor (365 aa).

Positions 1-19 are cleaved as a signal peptide; that stretch reads MALLLCFVLLCGVVDFARS. 2 Ig-like C2-type domains span residues 20 to 134 and 141 to 228; these read LSIT…KKIH and PSGA…LRLN. The Extracellular portion of the chain corresponds to 20–237; that stretch reads LSITTPEEMI…NVVPPSNKAG (218 aa). 2 disulfides stabilise this stretch: Cys41–Cys120 and Cys162–Cys212. 2 N-linked (GlcNAc...) asparagine glycosylation sites follow: Asn106 and Asn201. The helical transmembrane segment at 238–258 threads the bilayer; it reads LIAGAIIGTLLALALIGLIIF. S-palmitoyl cysteine attachment occurs at residues Cys259 and Cys260. Residues 259-365 are Cytoplasmic-facing; it reads CCRKKRREEK…PAQSKDGSIV (107 aa). Residues 269–282 show a composition bias toward basic and acidic residues; it reads YEKEVHHDIREDVP. The disordered stretch occupies residues 269–343; sequence YEKEVHHDIR…TLPPAKVAAP (75 aa). The segment covering 286 to 322 has biased composition (polar residues); the sequence is SRTSTARSYIGSNHSSLGSMSPSNMEGYSKTQYNQVP. 6 positions are modified to phosphoserine: Ser297, Ser304, Ser306, Ser323, Ser332, and Ser363. A PDZ-binding motif is present at residues 360-365; it reads KDGSIV.

As to quaternary structure, monomer. May form homodimer. Interacts with LNX, MAGI1, DLG4, PRKCABP, TJP1 and CTNNB1. Interacts with MPDZ; recruits MPDZ to intercellular contact sites. Interacts with JAML (homodimeric form). Secreted isoform 3, isoform 4 and isoform 5 can interact with the extracellular domain of the receptor. In terms of assembly, (Microbial infection) Interacts with adenovirus subgroups A, C, D, E and F fiber proteins as well as coxsackievirus B1, B2, B3, B4, B5 and B6 capsid proteins. In terms of processing, N-glycosylated. Palmitoylated on Cys-259 and/or Cys-260; required for proper localization to the plasma membrane. Expressed in pancreas, brain, heart, small intestine, testis, prostate and at a lower level in liver and lung. Isoform 5 is ubiquitously expressed. Isoform 3 is expressed in heart, lung and pancreas. In skeletal muscle, isoform 1 is found at the neuromuscular junction and isoform 2 is found in blood vessels. In cardiac muscle, isoform 1 and isoform 2 are found at intercalated disks. In heart expressed in subendothelial layers of the vessel wall but not in the luminal endothelial surface. Expression is elevated in hearts with dilated cardiomyopathy.

The protein localises to the cell membrane. It is found in the basolateral cell membrane. Its subcellular location is the cell junction. The protein resides in the tight junction. It localises to the adherens junction. The protein localises to the secreted. Its function is as follows. Component of the epithelial apical junction complex that may function as a homophilic cell adhesion molecule and is essential for tight junction integrity. Also involved in transepithelial migration of leukocytes through adhesive interactions with JAML a transmembrane protein of the plasma membrane of leukocytes. The interaction between both receptors also mediates the activation of gamma-delta T-cells, a subpopulation of T-cells residing in epithelia and involved in tissue homeostasis and repair. Upon epithelial CXADR-binding, JAML induces downstream cell signaling events in gamma-delta T-cells through PI3-kinase and MAP kinases. It results in proliferation and production of cytokines and growth factors by T-cells that in turn stimulate epithelial tissues repair. Functionally, (Microbial infection) Acts as a receptor for adenovirus type C. (Microbial infection) Acts as a receptor for Coxsackievirus B1 to B6. The protein is Coxsackievirus and adenovirus receptor (CXADR) of Homo sapiens (Human).